The primary structure comprises 140 residues: Profilin-1 (140 aa).

Ala-2 is subject to N-acetylalanine. A Phosphoserine modification is found at Ser-28. Residue Lys-54 forms a Glycyl lysine isopeptide (Lys-Gly) (interchain with G-Cter in SUMO2); alternate linkage. A Glycyl lysine isopeptide (Lys-Gly) (interchain with G-Cter in ubiquitin); alternate cross-link involves residue Lys-54. Phosphoserine is present on residues Ser-57 and Ser-85. An N6-acetyllysine mark is found at Lys-105 and Lys-108. A Phosphotyrosine modification is found at Tyr-129. Ser-138 bears the Phosphoserine; by ROCK1 mark.

This sequence belongs to the profilin family. As to quaternary structure, found in a complex with XPO6, Ran, ACTB and PFN1. Interacts with ACTB. Interacts with VASP. Interacts with HTT. Interacts with SH3BGRL. Occurs in many kinds of cells as a complex with monomeric actin in a 1:1 ratio. Interacts with ACTMAP. In terms of processing, phosphorylation at Ser-138 reduces its affinity for G-actin and blocks its interaction with HTT, reducing its ability to inhibit androgen receptor (AR) and HTT aggregation. As to expression, expressed in epididymis (at protein level).

The protein localises to the cytoplasm. It localises to the cytoskeleton. Its function is as follows. Binds to actin and affects the structure of the cytoskeleton. At high concentrations, profilin prevents the polymerization of actin, whereas it enhances it at low concentrations. By binding to PIP2, it inhibits the formation of IP3 and DG. Inhibits androgen receptor (AR) and HTT aggregation and binding of G-actin is essential for its inhibition of AR. The sequence is that of Profilin-1 (PFN1) from Homo sapiens (Human).